We begin with the raw amino-acid sequence, 156 residues long: Small ribosomal subunit protein uS17A (156 aa).

Ser-2 carries the post-translational modification N-acetylserine. Glycyl lysine isopeptide (Lys-Gly) (interchain with G-Cter in ubiquitin) cross-links involve residues Lys-15, Lys-46, Lys-56, Lys-57, Lys-79, Lys-96, Lys-105, Lys-133, Lys-141, and Lys-148.

Belongs to the universal ribosomal protein uS17 family. As to quaternary structure, component of the small ribosomal subunit (SSU). Mature yeast ribosomes consist of a small (40S) and a large (60S) subunit. The 40S small subunit contains 1 molecule of ribosomal RNA (18S rRNA) and 33 different proteins (encoded by 57 genes). The large 60S subunit contains 3 rRNA molecules (25S, 5.8S and 5S rRNA) and 46 different proteins (encoded by 81 genes). Post-translationally, N-terminally acetylated by acetyltransferase NatA.

It localises to the cytoplasm. Its function is as follows. Component of the ribosome, a large ribonucleoprotein complex responsible for the synthesis of proteins in the cell. The small ribosomal subunit (SSU) binds messenger RNAs (mRNAs) and translates the encoded message by selecting cognate aminoacyl-transfer RNA (tRNA) molecules. The large subunit (LSU) contains the ribosomal catalytic site termed the peptidyl transferase center (PTC), which catalyzes the formation of peptide bonds, thereby polymerizing the amino acids delivered by tRNAs into a polypeptide chain. The nascent polypeptides leave the ribosome through a tunnel in the LSU and interact with protein factors that function in enzymatic processing, targeting, and the membrane insertion of nascent chains at the exit of the ribosomal tunnel. The sequence is that of Small ribosomal subunit protein uS17A from Saccharomyces cerevisiae (strain ATCC 204508 / S288c) (Baker's yeast).